The primary structure comprises 80 residues: Conotoxin SmIVB (80 aa).

The N-terminal stretch at 1–21 (MGMRMMFTVFLLVVLATTVVS) is a signal peptide. The propeptide occupies 22-38 (IPSDRASDGRNAEVNER). The residue at position 40 (Pro-40) is a 4-hydroxyproline. Ser-45 is a glycosylation site (O-linked (HexNAc...) serine). 4-hydroxyproline is present on residues Pro-55, Pro-60, Pro-61, Pro-70, and Pro-72. Serine amide is present on Ser-75. A propeptide spanning residues 76 to 80 (GRRNH) is cleaved from the precursor.

The protein belongs to the conotoxin A superfamily. In terms of processing, contains 3 disulfide bonds. As to expression, expressed by the venom duct.

The protein localises to the secreted. In terms of biological role, neurotoxin with probable activity on sodium channel. Induces intense repetitive firing of the frog neuromuscular junction, leading to a tetanic contracture in muscle fiber (spastic paralysis). In vivo, shows the same effect as the whole venom when injected on fish prey. This chain is Conotoxin SmIVB, found in Conus stercusmuscarum (Fly-specked cone).